The sequence spans 255 residues: Small ribosomal subunit protein eS1 (255 aa).

The segment covering 1 to 18 (MAVGKNKRLSKGKKGLKK) has biased composition (basic residues). Residues 1-20 (MAVGKNKRLSKGKKGLKKRV) form a disordered region. At A2 the chain carries N-acetylalanine; partial.

Belongs to the eukaryotic ribosomal protein eS1 family. As to quaternary structure, component of the small ribosomal subunit. Mature ribosomes consist of a small (40S) and a large (60S) subunit. The 40S subunit contains about 33 different proteins and 1 molecule of RNA (18S). The 60S subunit contains about 49 different proteins and 3 molecules of RNA (25S, 5.8S and 5S).

The protein resides in the cytoplasm. This is Small ribosomal subunit protein eS1 from Coccidioides immitis (strain RS) (Valley fever fungus).